The sequence spans 373 residues: Putative protein YfkA (373 aa).

One can recognise a Radical SAM core domain in the interval 26-256 (YGDMQLTNVE…DIRDENTWML (231 aa)). [4Fe-4S] cluster-binding residues include cysteine 42, cysteine 46, and cysteine 49.

The protein belongs to the radical SAM superfamily. It depends on [4Fe-4S] cluster as a cofactor.

This Bacillus subtilis (strain 168) protein is Putative protein YfkA (yfkA).